The primary structure comprises 212 residues: Ribosomal RNA small subunit methyltransferase G (212 aa).

S-adenosyl-L-methionine contacts are provided by residues glycine 76, methionine 81, valine 127–glutamate 128, and arginine 145.

Belongs to the methyltransferase superfamily. RNA methyltransferase RsmG family.

It localises to the cytoplasm. The enzyme catalyses guanosine(527) in 16S rRNA + S-adenosyl-L-methionine = N(7)-methylguanosine(527) in 16S rRNA + S-adenosyl-L-homocysteine. In terms of biological role, specifically methylates the N7 position of guanine in position 527 of 16S rRNA. This Acinetobacter baylyi (strain ATCC 33305 / BD413 / ADP1) protein is Ribosomal RNA small subunit methyltransferase G.